The sequence spans 146 residues: Sperm surface protein Sp17 (146 aa).

Over residues 76–88 the composition is skewed to basic and acidic residues; that stretch reads EHESEKCEAEEKS. A disordered region spans residues 76-109; that stretch reads EHESEKCEAEEKSQSVTEEETPVLTIDSEDDKDK. Over residues 92–108 the composition is skewed to acidic residues; the sequence is TEEETPVLTIDSEDDKD. The IQ domain maps to 110-139; it reads EEMAALKIQAAFRGHLAREDVKKIRTNKAE.

Homodimer. May interact with ROPN1. In terms of processing, the N-terminus is blocked. Testis- and sperm-specific.

Its subcellular location is the membrane. Functionally, sperm surface zona pellucida binding protein. Helps to bind spermatozoa to the zona pellucida with high affinity. Might function in binding zona pellucida and carbohydrates. The sequence is that of Sperm surface protein Sp17 (SPA17) from Oryctolagus cuniculus (Rabbit).